The following is a 473-amino-acid chain: Histone-lysine N-methyltransferase ATXR2 (473 aa).

The 409-residue stretch at 33–441 folds into the SET domain; sequence KLITSRRCNG…KNEEVTISYI (409 aa). The MYND-type; degenerate zinc finger occupies 134–203; sequence EEQCGGSSSS…DWESSHSLLC (70 aa). Zn(2+)-binding residues include Cys176, Cys180, His199, and Cys203. Tyr440 contacts S-adenosyl-L-methionine.

The protein belongs to the class V-like SAM-binding methyltransferase superfamily. Histone-lysine methyltransferase family. TRX/MLL subfamily. As to quaternary structure, interacts with JMJ30. Binds to ARF7 and ARF19 in the nucleus.

It localises to the nucleus. The catalysed reaction is L-lysyl-[histone] + S-adenosyl-L-methionine = N(6)-methyl-L-lysyl-[histone] + S-adenosyl-L-homocysteine + H(+). Histone methyltransferase that methylates 'Lys-36' (H3K36me) of histone H3 to produce H3K36me3. Promotes early stages of cellular dedifferentiation through H3K36me3-dependent, and to a lesser degree H3K4me3-dependent, activation of Lateral organ Boundaries-Domain (LBD) (e.g. LBD16 and LBD29) genes. Positive regulator of root organogenesis including lateral root formation as well as adventitious root formation from wounded leaf tissues. Recruited by JMJ30/ARF (e.g. ARF7 and ARF19) complexes to promote the deposition of H3K36me3 and, to a lower extent, H3K4me3 at LBD genes promoters, thus ensuring their stable activation during callus formation on callus-inducing medium (CIM). The protein is Histone-lysine N-methyltransferase ATXR2 of Arabidopsis thaliana (Mouse-ear cress).